A 436-amino-acid polypeptide reads, in one-letter code: Histidine--tRNA ligase (436 aa).

It belongs to the class-II aminoacyl-tRNA synthetase family. Homodimer.

It localises to the cytoplasm. The enzyme catalyses tRNA(His) + L-histidine + ATP = L-histidyl-tRNA(His) + AMP + diphosphate + H(+). The polypeptide is Histidine--tRNA ligase (Psychrobacter sp. (strain PRwf-1)).